Here is a 130-residue protein sequence, read N- to C-terminus: Protein ApaG (130 aa).

Residues 3-127 form the ApaG domain; sequence SAVTQDIQIT…FSLDSPFVRR (125 aa).

This Methylocella silvestris (strain DSM 15510 / CIP 108128 / LMG 27833 / NCIMB 13906 / BL2) protein is Protein ApaG.